Reading from the N-terminus, the 245-residue chain is Orotidine 5'-phosphate decarboxylase (245 aa).

Residues Asp22, Lys44, 71–80 (DLKFHDIPNT), Thr131, Arg192, Gln201, Gly221, and Arg222 contribute to the substrate site. Lys73 (proton donor) is an active-site residue.

This sequence belongs to the OMP decarboxylase family. Type 1 subfamily. As to quaternary structure, homodimer.

It catalyses the reaction orotidine 5'-phosphate + H(+) = UMP + CO2. The protein operates within pyrimidine metabolism; UMP biosynthesis via de novo pathway; UMP from orotate: step 2/2. Catalyzes the decarboxylation of orotidine 5'-monophosphate (OMP) to uridine 5'-monophosphate (UMP). The polypeptide is Orotidine 5'-phosphate decarboxylase (Klebsiella pneumoniae (strain 342)).